A 454-amino-acid chain; its full sequence is Mitochondrial dynamics protein MID49 (454 aa).

Over 1–22 (MAEFSQKRGKRRGDEGLGSMVD) the chain is Mitochondrial intermembrane. The helical transmembrane segment at 23–43 (FLLANARLVLGVGGAAVLGIA) threads the bilayer. At 44–454 (TLAVKRFIDR…SGLQEPEGLL (411 aa)) the chain is on the cytoplasmic side. Residues 76–119 (ATPHLQPRPPPAALSQPVLPLAPSSSAPEGPAKSDPEVTPQLSS) form a disordered region. Over residues 88 to 108 (ALSQPVLPLAPSSSAPEGPAK) the composition is skewed to low complexity.

The protein belongs to the MID49/MID51 family. Interacts with DNM1L.

The protein resides in the mitochondrion outer membrane. Functionally, mitochondrial outer membrane protein which regulates mitochondrial organization. It is required for mitochondrial fission and promotes the recruitment and association of the fission mediator dynamin-related protein 1 (DNM1L) to the mitochondrial surface independently of the mitochondrial fission FIS1 and MFF proteins. Regulates DNM1L GTPase activity. The chain is Mitochondrial dynamics protein MID49 (MIEF2) from Pongo abelii (Sumatran orangutan).